A 653-amino-acid polypeptide reads, in one-letter code: Protease 1 (653 aa).

The segment at residues 1-20 (MKRICGSLLLLGLSISAALA) is a signal peptide (or 27). A propeptide spanning residues 21 to 205 (APASRPAAFD…RRLAAASGEK (185 aa)) is cleaved from the precursor. 3 cysteine pairs are disulfide-bonded: cysteine 211–cysteine 421, cysteine 217–cysteine 285, and cysteine 241–cysteine 263. Active-site charge relay system residues include histidine 262, aspartate 318, and serine 399. A PKD domain is found at 474–553 (NTPPVANFTS…TNTKTGSVTV (80 aa)). Residues 474–653 (NTPPVANFTS…AAQRAPGSCG (180 aa)) constitute a propeptide, thr/Ser-rich. Positions 555-653 (GGPGAQTYTN…AAQRAPGSCG (99 aa)) constitute a P/Homo B domain.

It belongs to the peptidase S1 family. In terms of processing, three disulfide bonds are present.

The protein localises to the secreted. The catalysed reaction is Preferential cleavage: Lys-|-Xaa, including Lys-|-Pro.. The chain is Protease 1 from Achromobacter lyticus.